The chain runs to 426 residues: Histidine--tRNA ligase (426 aa).

The protein belongs to the class-II aminoacyl-tRNA synthetase family. In terms of assembly, homodimer.

Its subcellular location is the cytoplasm. The catalysed reaction is tRNA(His) + L-histidine + ATP = L-histidyl-tRNA(His) + AMP + diphosphate + H(+). This chain is Histidine--tRNA ligase, found in Legionella pneumophila subsp. pneumophila (strain Philadelphia 1 / ATCC 33152 / DSM 7513).